The sequence spans 346 residues: D-alanine--D-alanine ligase (346 aa).

Residues 133 to 326 form the ATP-grasp domain; sequence KFLAQKAGVK…LANSLPKERE (194 aa). Residue 159–209 participates in ATP binding; the sequence is YPIILKPARLGSSIGVSVVHDDSELAYAKDVAFEFDKDVLVEPFIKGVKEY. Positions 282, 294, and 296 each coordinate Mg(2+).

Belongs to the D-alanine--D-alanine ligase family. The cofactor is Mg(2+). It depends on Mn(2+) as a cofactor.

It is found in the cytoplasm. It catalyses the reaction 2 D-alanine + ATP = D-alanyl-D-alanine + ADP + phosphate + H(+). Its pathway is cell wall biogenesis; peptidoglycan biosynthesis. Cell wall formation. In Campylobacter concisus (strain 13826), this protein is D-alanine--D-alanine ligase.